Here is a 109-residue protein sequence, read N- to C-terminus: MAQFEWVHAAWLALAIVLEIVANVFLKFSDGFRRKIFGLLSQAAVLAAFSALSQAVKGIDLSVAYALWGGFGIAATLAAGWILFGQRLNRKGWIGLVLLLAGMIMVKLT.

4 helical membrane-spanning segments follow: residues 6–26 (WVHA…NVFL), 36–56 (IFGL…SQAV), 64–84 (AYAL…WILF), and 88–108 (LNRK…MVKL).

The protein belongs to the drug/metabolite transporter (DMT) superfamily. Small multidrug resistance (SMR) (TC 2.A.7.1) family. MdtI subfamily. In terms of assembly, forms a complex with MdtJ.

The protein localises to the cell inner membrane. In terms of biological role, catalyzes the excretion of spermidine. The sequence is that of Spermidine export protein MdtI from Shigella dysenteriae serotype 1 (strain Sd197).